The following is an 85-amino-acid chain: Large ribosomal subunit protein bL31 (85 aa).

Residues lysine 64–lysine 85 form a disordered region.

The protein belongs to the bacterial ribosomal protein bL31 family. Type A subfamily. Part of the 50S ribosomal subunit.

Functionally, binds the 23S rRNA. This chain is Large ribosomal subunit protein bL31, found in Acaryochloris marina (strain MBIC 11017).